The chain runs to 332 residues: Ketol-acid reductoisomerase (NADP(+)) (332 aa).

The KARI N-terminal Rossmann domain occupies 1–182; sequence MATIYRDKDA…GGTRAGVLET (182 aa). NADP(+)-binding positions include 25 to 28, Lys-49, Ser-51, and 83 to 86; these read YGNQ and DELQ. Residue His-108 is part of the active site. Residue Gly-134 participates in NADP(+) binding. The 146-residue stretch at 183–328 folds into the KARI C-terminal knotted domain; sequence TFAEETETDL…AELRAMMPWL (146 aa). The Mg(2+) site is built by Asp-191, Glu-195, Glu-227, and Glu-231. Position 252 (Ser-252) interacts with substrate.

This sequence belongs to the ketol-acid reductoisomerase family. The cofactor is Mg(2+).

The catalysed reaction is (2R)-2,3-dihydroxy-3-methylbutanoate + NADP(+) = (2S)-2-acetolactate + NADPH + H(+). It carries out the reaction (2R,3R)-2,3-dihydroxy-3-methylpentanoate + NADP(+) = (S)-2-ethyl-2-hydroxy-3-oxobutanoate + NADPH + H(+). Its pathway is amino-acid biosynthesis; L-isoleucine biosynthesis; L-isoleucine from 2-oxobutanoate: step 2/4. The protein operates within amino-acid biosynthesis; L-valine biosynthesis; L-valine from pyruvate: step 2/4. In terms of biological role, involved in the biosynthesis of branched-chain amino acids (BCAA). Catalyzes an alkyl-migration followed by a ketol-acid reduction of (S)-2-acetolactate (S2AL) to yield (R)-2,3-dihydroxy-isovalerate. In the isomerase reaction, S2AL is rearranged via a Mg-dependent methyl migration to produce 3-hydroxy-3-methyl-2-ketobutyrate (HMKB). In the reductase reaction, this 2-ketoacid undergoes a metal-dependent reduction by NADPH to yield (R)-2,3-dihydroxy-isovalerate. In Methanothrix thermoacetophila (strain DSM 6194 / JCM 14653 / NBRC 101360 / PT) (Methanosaeta thermophila), this protein is Ketol-acid reductoisomerase (NADP(+)).